The sequence spans 751 residues: Catalase-peroxidase (751 aa).

Residues 1-21 are disordered; it reads MSNESKCPFHQTAGGGTTNRD. Residues 90 to 244 constitute a cross-link (tryptophyl-tyrosyl-methioninium (Trp-Tyr) (with M-270)); sequence WHSAGTYRIG…LAAVQMGLIY (155 aa). Catalysis depends on histidine 91, which acts as the Proton acceptor. The disordered stretch occupies residues 195–227; it reads YGKDQVKAQPPGQGDLVAEPAKHGEEQNRDLSA. The span at 214–227 shows a compositional bias: basic and acidic residues; sequence PAKHGEEQNRDLSA. The tryptophyl-tyrosyl-methioninium (Tyr-Met) (with W-90) cross-link spans 244 to 270; that stretch reads YVNPEGPEGNPDPVASGKDIRETFGRM. Histidine 285 serves as a coordination point for heme b. The disordered stretch occupies residues 365–387; that stretch reads AHQWRPKEGKGAGTVPDAHDPGK.

This sequence belongs to the peroxidase family. Peroxidase/catalase subfamily. As to quaternary structure, homodimer or homotetramer. Heme b is required as a cofactor. Formation of the three residue Trp-Tyr-Met cross-link is important for the catalase, but not the peroxidase activity of the enzyme.

It carries out the reaction H2O2 + AH2 = A + 2 H2O. It catalyses the reaction 2 H2O2 = O2 + 2 H2O. In terms of biological role, bifunctional enzyme with both catalase and broad-spectrum peroxidase activity. The chain is Catalase-peroxidase from Pseudomonas putida (strain ATCC 700007 / DSM 6899 / JCM 31910 / BCRC 17059 / LMG 24140 / F1).